Here is a 235-residue protein sequence, read N- to C-terminus: Serine protease SplA (235 aa).

A signal peptide spans 1–35; the sequence is MNENVMVKGLTALTILTSLGFAENISNQPHSIAKA. Active-site charge relay system residues include His-74, Asp-113, and Ser-189.

The protein belongs to the peptidase S1B family.

The protein localises to the secreted. The polypeptide is Serine protease SplA (splA) (Staphylococcus aureus (strain MSSA476)).